Here is a 374-residue protein sequence, read N- to C-terminus: Nuclear hormone receptor family member nhr-57 (374 aa).

A DNA-binding region (nuclear receptor) is located at residues 7 to 84; that stretch reads RKYCSVCHQL…VGMNPEVVQA (78 aa). NR C4-type zinc fingers lie at residues 10 to 30 and 48 to 67; these read CSVC…CKAC and CRKK…CKSC. The NR LBD domain maps to 124-374; sequence QMTPTLCGVM…DKIYKIIDGQ (251 aa).

Belongs to the nuclear hormone receptor family.

The protein resides in the nucleus. In terms of biological role, orphan nuclear receptor. The chain is Nuclear hormone receptor family member nhr-57 (nhr-57) from Caenorhabditis elegans.